Reading from the N-terminus, the 564-residue chain is MDEKQLVSQALSAAIDGVLGVEQIAAIIEKPKSSDLGDLAFPAFQLAKTLRKSPQIIAGEIAEKIDTKGFEKVIAVGPYVNFFLDKNATASEVIREVLTEGEHYGDANIGQGGNVPIDMSAPNIAKPFSIGHLRSTVIGDSIAKIYEKLGYQPIKINHLGDWGKQFGLLITAYKKYGDEATITANPIDELLKLYVKINAEAKEDPEVDEEGRQWFLKMEQGDEEALRIWKWFSDVSLIEFNRIYGKLGVSFDHFMGESFYSDKMDAIVEDLESKNLLHESKGALIVDLEKYNLNPALIKKTDGATLYITRDLATAAYRKKTFNFVKSLYVVGGEQTNHFKQLKAVLKEAGYDWSDDMVHVPFGMVTQGGKKFSTRKGHVVKLEMALDEAVDRAEKQIEAKNPNLENKEEVAKQVGVGAVKFYDLKTDRNNGYDFDLDEMVSFEGETGPYVQYAHARIQSILRKANRKVDINNISLAVSDAEAWEIVKALKEFPNVVKRAADNYEPSVIAKYAISLAQAFNKYYAHVRILEDDAQLDGRLALISATSIVLKEALRLLGVAAPENM.

The 'HIGH' region signature appears at proline 122–histidine 132.

This sequence belongs to the class-I aminoacyl-tRNA synthetase family. Monomer.

It is found in the cytoplasm. It carries out the reaction tRNA(Arg) + L-arginine + ATP = L-arginyl-tRNA(Arg) + AMP + diphosphate. The protein is Arginine--tRNA ligase of Lactococcus lactis subsp. lactis (strain IL1403) (Streptococcus lactis).